The sequence spans 392 residues: Galactokinase (392 aa).

37–40 (EHTD) serves as a coordination point for substrate. Residues serine 71 and 128 to 134 (GAGLSSS) contribute to the ATP site. The Mg(2+) site is built by serine 134 and glutamate 166. The Proton acceptor role is filled by aspartate 178. Tyrosine 228 serves as a coordination point for substrate.

This sequence belongs to the GHMP kinase family. GalK subfamily.

It localises to the cytoplasm. The catalysed reaction is alpha-D-galactose + ATP = alpha-D-galactose 1-phosphate + ADP + H(+). Its pathway is carbohydrate metabolism; galactose metabolism. Catalyzes the transfer of the gamma-phosphate of ATP to D-galactose to form alpha-D-galactose-1-phosphate (Gal-1-P). This is Galactokinase from Streptococcus pneumoniae serotype 4 (strain ATCC BAA-334 / TIGR4).